A 215-amino-acid polypeptide reads, in one-letter code: FGFR1 oncogene partner 2 homolog (215 aa).

Residues 12 to 186 (AKELVERLRE…REILQITKIS (175 aa)) are a coiled coil. Residues 193-215 (EDASENSPHSAPVPNTDLILRKS) form a disordered region.

It belongs to the SIKE family.

It localises to the cytoplasm. This Xenopus laevis (African clawed frog) protein is FGFR1 oncogene partner 2 homolog (fgfr1op2).